The primary structure comprises 54 residues: Preprotein translocase subunit SecG (54 aa).

The Cytoplasmic segment spans residues 1–31; sequence MSSGSNSGGLMSSAGLVRYFDSEDRDAIAID. The helical transmembrane segment at 32–53 threads the bilayer; the sequence is PKTVLAFCVLFGVFVQILSLTV. Residue Ala54 is a topological domain, extracellular.

It belongs to the SEC61-beta family. Component of the protein translocase complex. Heterotrimer consisting of alpha (SecY), beta (SecG) and gamma (SecE) subunits. Can form oligomers of the heterotrimer.

Its subcellular location is the cell membrane. In terms of biological role, involved in protein export. The function of the beta subunit is unknown, but it may be involved in stabilization of the trimeric complex. The protein is Preprotein translocase subunit SecG of Halorubrum lacusprofundi (strain ATCC 49239 / DSM 5036 / JCM 8891 / ACAM 34).